We begin with the raw amino-acid sequence, 436 residues long: C4-dicarboxylate transport protein 2 (436 aa).

Helical transmembrane passes span 14 to 34 (VLVAIAIGIALGHWYPETAVA), 45 to 65 (LIKMAIAPIIFCTVVTGIAGM), 77 to 97 (MALLYFEIVSTVALIIGLVVV), 142 to 162 (VVGAFANGDILQVLFFSVLFG), 198 to 218 (PIGAFGAMAFTIGAYGVGSLV), 223 to 243 (LMLCFYITCLLFVLIVLGGIA), 290 to 310 (VVGLVIPTGYSFNLDGTSIYL), 331 to 351 (ITLLLVLLIASKGAAGVTGSG), and 353 to 373 (IVLAATLSAVGHLPVAGLALI). Residues 414–436 (ELAGEGNASSPASDIPVGGREAV) form a disordered region.

Belongs to the dicarboxylate/amino acid:cation symporter (DAACS) (TC 2.A.23) family.

The protein resides in the cell inner membrane. Its function is as follows. Responsible for the transport of dicarboxylates such as succinate, fumarate, and malate from the periplasm across the membrane. In Pseudomonas paraeruginosa (strain DSM 24068 / PA7) (Pseudomonas aeruginosa (strain PA7)), this protein is C4-dicarboxylate transport protein 2.